Reading from the N-terminus, the 424-residue chain is Serine/threonine-protein kinase H1 (424 aa).

The N-myristoyl glycine moiety is linked to residue Gly2. A lipid anchor (S-palmitoyl cysteine) is attached at Cys3. Residues 49–81 (KGGFPAASQGANPSPGTPRTSHTEPPSEPPRRA) are disordered. Positions 57–72 (QGANPSPGTPRTSHTE) are enriched in polar residues. Positions 98 to 355 (YDIKALIGRG…ALQALRHPWV (258 aa)) constitute a Protein kinase domain. ATP-binding positions include 104–112 (IGRGSFSRV) and Lys127. The active-site Proton acceptor is the Asp218. The segment at 378–407 (RASSRCQSTKSAQSTRSSRSTRSNKSRRVR) is disordered. Phosphoserine; by autocatalysis occurs at positions 380 and 381. The segment covering 385–398 (STKSAQSTRSSRST) has biased composition (low complexity).

Belongs to the protein kinase superfamily. CAMK Ser/Thr protein kinase family. As to quaternary structure, homodimer. Post-translationally, autophosphorylated on serine residues. In terms of processing, myristoylated. Required for membrane association. Prerequisite for palmitoylation to occur. Palmitoylated.

It is found in the golgi apparatus. Its subcellular location is the cytoplasm. The protein localises to the cytoskeleton. It localises to the microtubule organizing center. The protein resides in the centrosome. It is found in the nucleus speckle. Its subcellular location is the endoplasmic reticulum membrane. The protein localises to the cell membrane. It catalyses the reaction L-seryl-[protein] + ATP = O-phospho-L-seryl-[protein] + ADP + H(+). The catalysed reaction is L-threonyl-[protein] + ATP = O-phospho-L-threonyl-[protein] + ADP + H(+). Activity depends on Ca(2+) concentration. Its function is as follows. May be a SFC-associated serine kinase (splicing factor compartment-associated serine kinase) with a role in intranuclear SR protein (non-snRNP splicing factors containing a serine/arginine-rich domain) trafficking and pre-mRNA processing. This is Serine/threonine-protein kinase H1 (PSKH1) from Bos taurus (Bovine).